A 250-amino-acid chain; its full sequence is UPF0193 protein EVG1 homolog (250 aa).

Residues 86 to 110 (ESLRNGEPLPLPEPPRPNTNNDPDK) are disordered.

It belongs to the UPF0193 (EVG1) family.

This Drosophila melanogaster (Fruit fly) protein is UPF0193 protein EVG1 homolog.